Reading from the N-terminus, the 411-residue chain is Pre-mRNA-splicing factor dre4 (411 aa).

Residues 3-36 (QPLPPGWTEHKAPSGIPYYWNAELKKSTYQRPSF) enclose the WW 1 domain. A disordered region spans residues 65–84 (NAEERKNSRDLRKQLPDRPK). The span at 66–83 (AEERKNSRDLRKQLPDRP) shows a compositional bias: basic and acidic residues. Residues 89-122 (IPNNDSWVVVFTKKNRYFFHNLKSHESYWEPPLE) enclose the WW 2 domain. The tract at residues 138-209 (ISKDSSQSQN…KSHSAEELEF (72 aa)) is disordered. Positions 140–151 (KDSSQSQNVDSG) are enriched in polar residues. Positions 152-166 (KTNHEEIHESRHLQT) are enriched in basic and acidic residues. Residues 167-179 (EIEEPSGLEESSE) show a composition bias toward acidic residues. The FF domain occupies 239–293 (TDDARRVFTELLKDKNIGAYQPWELVYPKLLDDDRFYVLDSGERRKEVFEEYCKS).

In terms of assembly, component of the spliceosomal complex. Interacts with prp19.

The protein localises to the nucleus. Its function is as follows. Component of the spliceosome involved in mRNA processing. The polypeptide is Pre-mRNA-splicing factor dre4 (dre4) (Schizosaccharomyces pombe (strain 972 / ATCC 24843) (Fission yeast)).